We begin with the raw amino-acid sequence, 600 residues long: NADH-quinone oxidoreductase subunit C/D (600 aa).

Residues 1–190 (MVNNMTDLTA…SPFELTKAKQ (190 aa)) form an NADH dehydrogenase I subunit C region. The interval 214–600 (DFMFLNLGPN…IDFVMSDVDR (387 aa)) is NADH dehydrogenase I subunit D.

It in the N-terminal section; belongs to the complex I 30 kDa subunit family. The protein in the C-terminal section; belongs to the complex I 49 kDa subunit family. NDH-1 is composed of 13 different subunits. Subunits NuoB, CD, E, F, and G constitute the peripheral sector of the complex.

The protein resides in the cell inner membrane. It catalyses the reaction a quinone + NADH + 5 H(+)(in) = a quinol + NAD(+) + 4 H(+)(out). Its function is as follows. NDH-1 shuttles electrons from NADH, via FMN and iron-sulfur (Fe-S) centers, to quinones in the respiratory chain. The immediate electron acceptor for the enzyme in this species is believed to be ubiquinone. Couples the redox reaction to proton translocation (for every two electrons transferred, four hydrogen ions are translocated across the cytoplasmic membrane), and thus conserves the redox energy in a proton gradient. The sequence is that of NADH-quinone oxidoreductase subunit C/D from Escherichia coli (strain K12 / DH10B).